Reading from the N-terminus, the 126-residue chain is Fluoride-specific ion channel FluC (126 aa).

Helical transmembrane passes span 4-24 (SILA…FLGI), 35-55 (LGTF…VAGF), 68-88 (FVIT…AEVV), and 103-123 (IVIH…TVSL). Residues glycine 75 and serine 78 each contribute to the Na(+) site.

Belongs to the fluoride channel Fluc/FEX (TC 1.A.43) family.

The protein localises to the cell inner membrane. It carries out the reaction fluoride(in) = fluoride(out). With respect to regulation, na(+) is not transported, but it plays an essential structural role and its presence is essential for fluoride channel function. Fluoride-specific ion channel. Important for reducing fluoride concentration in the cell, thus reducing its toxicity. The chain is Fluoride-specific ion channel FluC from Paraburkholderia xenovorans (strain LB400).